The chain runs to 219 residues: Orotate phosphoribosyltransferase (219 aa).

Residue Lys-26 coordinates 5-phospho-alpha-D-ribose 1-diphosphate. An orotate-binding site is contributed by 34–35 (FF). 5-phospho-alpha-D-ribose 1-diphosphate is bound by residues 72-73 (YK), Arg-98, Lys-99, Lys-102, His-104, and 124-132 (DDVITAGTA). Orotate contacts are provided by Thr-128 and Arg-156.

This sequence belongs to the purine/pyrimidine phosphoribosyltransferase family. PyrE subfamily. In terms of assembly, homodimer. Mg(2+) serves as cofactor.

It carries out the reaction orotidine 5'-phosphate + diphosphate = orotate + 5-phospho-alpha-D-ribose 1-diphosphate. The protein operates within pyrimidine metabolism; UMP biosynthesis via de novo pathway; UMP from orotate: step 1/2. In terms of biological role, catalyzes the transfer of a ribosyl phosphate group from 5-phosphoribose 1-diphosphate to orotate, leading to the formation of orotidine monophosphate (OMP). This chain is Orotate phosphoribosyltransferase, found in Xylella fastidiosa (strain 9a5c).